A 565-amino-acid chain; its full sequence is Putative serine protease pcp-1 (565 aa).

An N-terminal signal peptide occupies residues 1 to 17 (MRWFLVLLLVALVSVEA). N69, N107, and N126 each carry an N-linked (GlcNAc...) asparagine glycan. S177 acts as the Charge relay system in catalysis. Residues N240, N244, N257, N271, N319, and N347 are each glycosylated (N-linked (GlcNAc...) asparagine). Catalysis depends on charge relay system residues D451 and H479.

The protein belongs to the peptidase S28 family.

In Caenorhabditis elegans, this protein is Putative serine protease pcp-1 (pcp-1).